Consider the following 203-residue polypeptide: Urease accessory protein UreG (203 aa).

12 to 19 contacts GTP; sequence GPVGSGKT.

Belongs to the SIMIBI class G3E GTPase family. UreG subfamily. In terms of assembly, homodimer. UreD, UreF and UreG form a complex that acts as a GTP-hydrolysis-dependent molecular chaperone, activating the urease apoprotein by helping to assemble the nickel containing metallocenter of UreC. The UreE protein probably delivers the nickel.

It is found in the cytoplasm. In terms of biological role, facilitates the functional incorporation of the urease nickel metallocenter. This process requires GTP hydrolysis, probably effectuated by UreG. In Alteromonas mediterranea (strain DSM 17117 / CIP 110805 / LMG 28347 / Deep ecotype), this protein is Urease accessory protein UreG.